The following is a 210-amino-acid chain: Ribosomal RNA large subunit methyltransferase E (210 aa).

5 residues coordinate S-adenosyl-L-methionine: glycine 67, tryptophan 69, aspartate 87, aspartate 103, and aspartate 128. The active-site Proton acceptor is lysine 168.

It belongs to the class I-like SAM-binding methyltransferase superfamily. RNA methyltransferase RlmE family.

The protein resides in the cytoplasm. The catalysed reaction is uridine(2552) in 23S rRNA + S-adenosyl-L-methionine = 2'-O-methyluridine(2552) in 23S rRNA + S-adenosyl-L-homocysteine + H(+). In terms of biological role, specifically methylates the uridine in position 2552 of 23S rRNA at the 2'-O position of the ribose in the fully assembled 50S ribosomal subunit. In Psychrobacter arcticus (strain DSM 17307 / VKM B-2377 / 273-4), this protein is Ribosomal RNA large subunit methyltransferase E.